Here is a 26-residue protein sequence, read N- to C-terminus: Turripeptide OL57 (26 aa).

Post-translationally, contains 2 disulfide bonds. Expressed by the venom duct.

Its subcellular location is the secreted. Functionally, acts as a neurotoxin by inhibiting an ion channel. The sequence is that of Turripeptide OL57 from Iotyrris olangoensis (Sea snail).